Consider the following 522-residue polypeptide: Type-2 serine--tRNA ligase (522 aa).

L-serine is bound at residue Ala-319. Zn(2+) is bound at residue Cys-321. Arg-350 is a binding site for L-serine. Residues 350–352 (RWE) and 361–362 (RV) contribute to the ATP site. 367 to 369 (RIE) provides a ligand contact to L-serine. 2 residues coordinate Zn(2+): Glu-369 and Cys-476. Arg-483 contributes to the ATP binding site.

This sequence belongs to the class-II aminoacyl-tRNA synthetase family. Type-2 seryl-tRNA synthetase subfamily. In terms of assembly, homodimer. Requires Zn(2+) as cofactor.

It is found in the cytoplasm. The enzyme catalyses tRNA(Ser) + L-serine + ATP = L-seryl-tRNA(Ser) + AMP + diphosphate + H(+). The catalysed reaction is tRNA(Sec) + L-serine + ATP = L-seryl-tRNA(Sec) + AMP + diphosphate + H(+). Its pathway is aminoacyl-tRNA biosynthesis; selenocysteinyl-tRNA(Sec) biosynthesis; L-seryl-tRNA(Sec) from L-serine and tRNA(Sec): step 1/1. Its function is as follows. Catalyzes the attachment of serine to tRNA(Ser). Is also able to aminoacylate tRNA(Sec) with serine, to form the misacylated tRNA L-seryl-tRNA(Sec), which will be further converted into selenocysteinyl-tRNA(Sec). This Methanococcus aeolicus (strain ATCC BAA-1280 / DSM 17508 / OCM 812 / Nankai-3) protein is Type-2 serine--tRNA ligase (serS).